Reading from the N-terminus, the 232-residue chain is 7-cyano-7-deazaguanine synthase (232 aa).

An ATP-binding site is contributed by 8 to 18 (FSGGQDSTTCL). The Zn(2+) site is built by Cys187, Cys196, Cys199, and Cys202.

This sequence belongs to the QueC family. It depends on Zn(2+) as a cofactor.

The catalysed reaction is 7-carboxy-7-deazaguanine + NH4(+) + ATP = 7-cyano-7-deazaguanine + ADP + phosphate + H2O + H(+). Its pathway is purine metabolism; 7-cyano-7-deazaguanine biosynthesis. Catalyzes the ATP-dependent conversion of 7-carboxy-7-deazaguanine (CDG) to 7-cyano-7-deazaguanine (preQ(0)). This Vibrio parahaemolyticus serotype O3:K6 (strain RIMD 2210633) protein is 7-cyano-7-deazaguanine synthase.